We begin with the raw amino-acid sequence, 547 residues long: Chaperonin GroEL 2 (547 aa).

Residues 30–33, Lys51, 87–91, Gly415, and Asp496 contribute to the ATP site; these read TLGP and DGTTT.

Belongs to the chaperonin (HSP60) family. Forms a cylinder of 14 subunits composed of two heptameric rings stacked back-to-back. Interacts with the co-chaperonin GroES.

The protein resides in the cytoplasm. The catalysed reaction is ATP + H2O + a folded polypeptide = ADP + phosphate + an unfolded polypeptide.. Together with its co-chaperonin GroES, plays an essential role in assisting protein folding. The GroEL-GroES system forms a nano-cage that allows encapsulation of the non-native substrate proteins and provides a physical environment optimized to promote and accelerate protein folding. In Rhodopseudomonas palustris (strain ATCC BAA-98 / CGA009), this protein is Chaperonin GroEL 2.